The primary structure comprises 387 residues: D(4) dopamine receptor (387 aa).

Topologically, residues 1 to 34 (MGNSSATEDGGLLAGRGPESLGTGAGLGGAGAAA) are extracellular. N-linked (GlcNAc...) asparagine glycosylation occurs at N3. Residues 35 to 57 (LVGGVLLIGLVLAGNSLVCVSVA) form a helical membrane-spanning segment. Topologically, residues 58–67 (SERTLQTPTN) are cytoplasmic. A helical membrane pass occupies residues 68–90 (YFIVSLAAADLLLAVLVLPLFVY). Residue D77 coordinates Na(+). Residues 91–106 (SEVQGGVWLLSPRLCD) lie on the Extracellular side of the membrane. Cysteines 105 and 180 form a disulfide. The chain crosses the membrane as a helical span at residues 107–128 (TLMAMDVMLCTASIFNLCAISV). A Na(+)-binding site is contributed by S119. The Cytoplasmic portion of the chain corresponds to 129–146 (DRFVAVTVPLRYNQQGQC). Residues 147 to 170 (QLLLIAATWLLSAAVASPVVCGLN) form a helical membrane-spanning segment. Residues 171 to 186 (DVPGRDPAVCCLENRD) lie on the Extracellular side of the membrane. The helical transmembrane segment at 187-208 (YVVYSSVCSFFLPCPLMLLLYW) threads the bilayer. Over 209–314 (ATFRGLRRWE…ITGRERKAMR (106 aa)) the chain is Cytoplasmic. Disordered regions lie at residues 224 to 247 (KLHSRAPRRPSGPGPPVSDPTQGP) and 287 to 306 (AALPQPPEPSSRRRRGAKIT). Residues 315-337 (VLPVVVGAFLVCWTPFFVVHITR) form a helical membrane-spanning segment. Topologically, residues 338–346 (ALCPACFVS) are extracellular. Residues C340 and C343 are joined by a disulfide bond. Residues 347–369 (PRLVSAVTWLGYVNSALNPIIYT) traverse the membrane as a helical segment. Residues 370-387 (IFNAEFRSVFRKTLRLRC) are Cytoplasmic-facing. C387 is lipidated: S-palmitoyl cysteine.

It belongs to the G-protein coupled receptor 1 family. As to quaternary structure, forms homo- and heterooligomers with DRD2. D4.7 allele exhibits higher affinity for homodimers compared to DRD2 heterodimers, while alleles D42. and 4.4 have similar affinities for both. The interaction with DRD2 may modulate agonist-induced downstream signaling. Interacts with CLIC6. Interacts with GPRASP1. May interact with ADORA2A. Interacts with KLHL12. Palmitoylated. Palmitoylation of the C-terminal Cys is important for normal expression at the cell membrane. Detected in olfactory bulb, hypothalamus, olfactory tubercle, brainstem and striatum.

Its subcellular location is the cell membrane. In terms of biological role, dopamine receptor responsible for neuronal signaling in the mesolimbic system of the brain, an area of the brain that regulates emotion and complex behavior. Activated by dopamine, but also by epinephrine and norepinephrine, and by numerous synthetic agonists and drugs. Agonist binding triggers signaling via G proteins that inhibit adenylyl cyclase. Modulates the circadian rhythm of contrast sensitivity by regulating the rhythmic expression of NPAS2 in the retinal ganglion cells. The protein is D(4) dopamine receptor (Drd4) of Mus musculus (Mouse).